Reading from the N-terminus, the 227-residue chain is Pre-hexon-linking protein VIII (227 aa).

A Phosphothreonine; by host modification is found at Thr-64. Residues 112–157 constitute a propeptide that is removed on maturation; it reads FRHRVRSPGQGITHLTIRGRGIQLNDESVSSSLGLRPDGTFQIGGA. Ser-118 and Ser-174 each carry phosphoserine; by host.

It belongs to the adenoviridae hexon-linking protein family. In terms of assembly, interacts with the peripentonal hexons as well as the hexons in the facets. Part of a complex composed of the core-capsid bridging protein, the endosome lysis protein VI and the hexon-linking protein VIII; these interactions bridge the virus core to the capsid. Post-translationally, cleaved by the viral protease during virion maturation. May cause the middle segment to be shed from the capsid.

It localises to the virion. The protein localises to the host nucleus. Functionally, structural component of the virion that acts as a cement protein on the capsid interior and which glue the peripentonal hexons and group-of-nine hexons together. The chain is Pre-hexon-linking protein VIII from Human adenovirus C serotype 5 (HAdV-5).